Reading from the N-terminus, the 127-residue chain is Ribonuclease P protein component 1 (127 aa).

This sequence belongs to the eukaryotic/archaeal RNase P protein component 1 family. Consists of a catalytic RNA component and at least 5 protein subunits. Forms a heterodimeric subcomplex with Rnp4. Reconstituted enzyme missing individual protein subunits is suboptimally active, showing each subunit contributes to optimization of activity.

The protein resides in the cytoplasm. The catalysed reaction is Endonucleolytic cleavage of RNA, removing 5'-extranucleotides from tRNA precursor.. Part of ribonuclease P (RNase P), a protein complex that generates mature tRNA molecules by cleaving their 5'-ends. Binds RNase P RNA. In Pyrococcus horikoshii (strain ATCC 700860 / DSM 12428 / JCM 9974 / NBRC 100139 / OT-3), this protein is Ribonuclease P protein component 1.